A 96-amino-acid polypeptide reads, in one-letter code: Large ribosomal subunit protein uL23 (96 aa).

The protein belongs to the universal ribosomal protein uL23 family. As to quaternary structure, part of the 50S ribosomal subunit. Contacts protein L29, and trigger factor when it is bound to the ribosome.

Its function is as follows. One of the early assembly proteins it binds 23S rRNA. One of the proteins that surrounds the polypeptide exit tunnel on the outside of the ribosome. Forms the main docking site for trigger factor binding to the ribosome. The sequence is that of Large ribosomal subunit protein uL23 from Endomicrobium trichonymphae.